Here is a 438-residue protein sequence, read N- to C-terminus: MENDMETATMTQDYHIANINLADWGRKEIEIAETEMPGLMALRKKYKNAKPLKGARIAGCIHMTIQTAVLIETLMLLGAEVRWSSCNIFSTQDHAAAALAQKGIPIFAWKGETEEEYWRCIASTLEGPKGWTPNLLLDDGGDLTAHTLQKHPELCQNIRGVSEETTTGVHRLYRMLKEGSLKFPAINVNDSVTKSKFDNLYGCRESLIDSIKRATDVMIAGKRVVVCGYGDVGKGCAQSLRAYGATVYITEIDPICALQAAMEGYRVVTMDEMADSADIFVTATGNTDIITHEHMLKMKDQAIVCNIGHFDNEIDIASLQDYQWMNIKPQVDQVIFPDGKRLTVLAQGRLVNLGCATGHPSFVMSNSFTNQVLAQIELWQYPEKYPIGVYVLPKHLDEEVARLHLERVGGKLTTLTEKQADYIGVDPEGPFKSEHYRY.

Residues Thr-64, Asp-139, and Glu-164 each coordinate substrate. Residue 165–167 participates in NAD(+) binding; it reads TTT. The substrate site is built by Lys-194 and Asp-198. NAD(+)-binding positions include Asn-199, 228–233, Glu-251, Asn-286, 307–309, and Asn-352; these read GYGDVG and IGH.

This sequence belongs to the adenosylhomocysteinase family. NAD(+) serves as cofactor.

The protein localises to the cytoplasm. The enzyme catalyses S-adenosyl-L-homocysteine + H2O = L-homocysteine + adenosine. Its pathway is amino-acid biosynthesis; L-homocysteine biosynthesis; L-homocysteine from S-adenosyl-L-homocysteine: step 1/1. In terms of biological role, may play a key role in the regulation of the intracellular concentration of adenosylhomocysteine. This chain is Adenosylhomocysteinase, found in Coxiella burnetii (strain RSA 493 / Nine Mile phase I).